A 310-amino-acid polypeptide reads, in one-letter code: N-acetyl-gamma-glutamyl-phosphate reductase (310 aa).

The active site involves Cys-117.

The protein belongs to the NAGSA dehydrogenase family. Type 2 subfamily.

It localises to the cytoplasm. It catalyses the reaction N-acetyl-L-glutamate 5-semialdehyde + phosphate + NADP(+) = N-acetyl-L-glutamyl 5-phosphate + NADPH + H(+). It participates in amino-acid biosynthesis; L-arginine biosynthesis; N(2)-acetyl-L-ornithine from L-glutamate: step 3/4. Catalyzes the NADPH-dependent reduction of N-acetyl-5-glutamyl phosphate to yield N-acetyl-L-glutamate 5-semialdehyde. This Rhizobium etli (strain ATCC 51251 / DSM 11541 / JCM 21823 / NBRC 15573 / CFN 42) protein is N-acetyl-gamma-glutamyl-phosphate reductase.